Reading from the N-terminus, the 318-residue chain is Mitochondrial thiamine pyrophosphate carrier (318 aa).

Solcar repeat units lie at residues 13–106, 116–202, and 214–309; these read NSKL…LTEL, HQFS…LKRA, and TGNL…FCNL. 5 consecutive transmembrane segments (helical) span residues 19–39, 87–107, 122–142, 173–193, and 220–240; these read AVAG…LDVI, ILSI…TELL, FVCG…VDVL, VFYK…GLQF, and LLCG…LDLI. Residues 241 to 246 carry the Substrate recognition motif; sequence KKRLQV. Residues 293–313 traverse the membrane as a helical segment; that stretch reads ALSTGFMFFWYELFCNLFHCI.

Belongs to the mitochondrial carrier (TC 2.A.29) family.

The protein localises to the mitochondrion membrane. The enzyme catalyses thiamine phosphate(out) + thiamine diphosphate(in) = thiamine phosphate(in) + thiamine diphosphate(out). Mitochondrial transporter mediating uptake of thiamine diphosphate into mitochondria. It is not clear if the antiporter activity is affected by the membrane potential or by the proton electrochemical gradient. The sequence is that of Mitochondrial thiamine pyrophosphate carrier (Slc25a19) from Mus musculus (Mouse).